A 251-amino-acid polypeptide reads, in one-letter code: Pantothenate synthetase (251 aa).

28-35 (MGALHTGH) contributes to the ATP binding site. The Proton donor role is filled by His35. Gln59 is a (R)-pantoate binding site. Beta-alanine is bound at residue Gln59. Residue 145 to 148 (GEKD) participates in ATP binding. Gln151 serves as a coordination point for (R)-pantoate. ATP contacts are provided by residues Val174 and 182-185 (KSSR).

Belongs to the pantothenate synthetase family. Homodimer.

It is found in the cytoplasm. It catalyses the reaction (R)-pantoate + beta-alanine + ATP = (R)-pantothenate + AMP + diphosphate + H(+). It functions in the pathway cofactor biosynthesis; (R)-pantothenate biosynthesis; (R)-pantothenate from (R)-pantoate and beta-alanine: step 1/1. Catalyzes the condensation of pantoate with beta-alanine in an ATP-dependent reaction via a pantoyl-adenylate intermediate. This Bdellovibrio bacteriovorus (strain ATCC 15356 / DSM 50701 / NCIMB 9529 / HD100) protein is Pantothenate synthetase.